Reading from the N-terminus, the 235-residue chain is Large ribosomal subunit protein uL1 (235 aa).

Belongs to the universal ribosomal protein uL1 family. Part of the 50S ribosomal subunit.

Its function is as follows. Binds directly to 23S rRNA. The L1 stalk is quite mobile in the ribosome, and is involved in E site tRNA release. In terms of biological role, protein L1 is also a translational repressor protein, it controls the translation of the L11 operon by binding to its mRNA. The polypeptide is Large ribosomal subunit protein uL1 (Arthrobacter sp. (strain FB24)).